The following is a 340-amino-acid chain: Protein FAM50A-A (340 aa).

2 disordered regions span residues 1–22 and 123–178; these read MAQYKGAASEAGRAMQLMKKRE and NLEE…EEEN. Positions 124–146 are enriched in acidic residues; it reads LEEDEECEDEEGEEEESDKEDPP. Positions 169-178 are enriched in basic and acidic residues; the sequence is PDRDREEEEN.

It is found in the nucleus. Functionally, probably involved in the regulation of pre-mRNA splicing. This is Protein FAM50A-A (fam50a-a) from Xenopus laevis (African clawed frog).